A 609-amino-acid chain; its full sequence is Major facilitator superfamily domain-containing protein 6-like protein A (609 aa).

2 helical membrane-spanning segments follow: residues 41 to 61 (LGLG…VHLL) and 78 to 98 (FFIM…AYYP). A disordered region spans residues 201–241 (SGKAQKVMSSKSAASNSKQRSSLNNHTSPYATHPNVSHHPS). Positions 207 to 230 (VMSSKSAASNSKQRSSLNNHTSPY) are enriched in polar residues. 9 helical membrane-spanning segments follow: residues 265–285 (IFLI…PLEW), 307–327 (LWIW…FLVD), 340–360 (VFFH…LSTL), 388–408 (IVLT…TQNF), 420–440 (ELYM…LYFF), 452–472 (WMVA…SFLW), 475–495 (WSVL…WWAI), 513–535 (LALR…GFII), and 541–561 (AVLY…FLLV).

This sequence belongs to the major facilitator superfamily. MFSD6 family.

Its subcellular location is the membrane. The polypeptide is Major facilitator superfamily domain-containing protein 6-like protein A (mfsd6l-a) (Xenopus laevis (African clawed frog)).